The primary structure comprises 869 residues: Facilitated trehalose transporter Tret1 (869 aa).

Disordered regions lie at residues 1–214 (MSGR…QKAT) and 258–315 (KESS…LIHR). The Cytoplasmic portion of the chain corresponds to 1-404 (MSGRDNRGAG…VYRPTTNPIY (404 aa)). Residues 25–43 (KLKEKLTRAGDDQGYHRVE) show a composition bias toward basic and acidic residues. Low complexity-rich tracts occupy residues 44–57 (SNLS…SLDT), 79–92 (PQQQ…QQLR), and 118–127 (PFQQQQQRTP). 2 stretches are compositionally biased toward basic and acidic residues: residues 147–156 (EIREHRDRQQ) and 258–291 (KESS…KLDK). Residues serine 260, serine 261, serine 262, serine 332, and serine 334 each carry the phosphoserine modification. The interval 336 to 368 (EDFHTSRQHFQQQRSISTDSRKSRRPYEMDEMG) is disordered. The segment covering 343–353 (QHFQQQRSIST) has biased composition (polar residues). Over residues 354–368 (DSRKSRRPYEMDEMG) the composition is skewed to basic and acidic residues. A helical membrane pass occupies residues 405-425 (IWTQVLAALSVSLGSLVVGFV). Over 426–452 (SAYTSPALVSMTNRNMTSFEVTPQAAS) the chain is Extracellular. A glycan (N-linked (GlcNAc...) asparagine) is linked at asparagine 440. Residues 453–473 (WVGGIMPLAGLAGGIAGGPFI) traverse the membrane as a helical segment. Over 474 to 485 (EYLGRRNTILAT) the chain is Cytoplasmic. Residues 486–506 (AIPFIVSSLLIACAVNVAMVL) traverse the membrane as a helical segment. The Extracellular portion of the chain corresponds to 507–509 (AGR). The helical transmembrane segment at 510-530 (FLAGFCVGIASLSLPVYLGET) threads the bilayer. Topologically, residues 531-536 (VQPEVR) are cytoplasmic. Residues 537-557 (GTLGLLPTAFGNIGILLCFVA) form a helical membrane-spanning segment. At 558–564 (GTYMDWS) the chain is on the extracellular side. The helical transmembrane segment at 565–585 (MLAFLGAALPVPFLILMFLIP) threads the bilayer. The Cytoplasmic portion of the chain corresponds to 586 to 654 (ETPRWFVSRG…NLKPLSISLG (69 aa)). The chain crosses the membrane as a helical span at residues 655-675 (LMFFQQLSGINAVIFYTVSIF). Residues 676-685 (KDAGSTIDGN) lie on the Extracellular side of the membrane. The helical transmembrane segment at 686–706 (LCTIIVGIVNFMATFIATLLI) threads the bilayer. Over 707–712 (DRAGRK) the chain is Cytoplasmic. Residues 713 to 733 (ILLYVSNIAMIITLFVLGGFF) traverse the membrane as a helical segment. Over 734–752 (YCKSHGQDVSQLGWLPLSC) the chain is Extracellular. Residues 753 to 773 (FVIYILGFSLGFGPIPWLMMG) form a helical membrane-spanning segment. Residues 774 to 779 (EILPSK) are Cytoplasmic-facing. The helical transmembrane segment at 780–800 (IRGSAASVATAFNWSCTFVVT) threads the bilayer. Residues 801 to 813 (KTFQDMIDFMGAH) are Extracellular-facing. Residues 814–834 (GAFWLFGSICFIGLFFVILYV) form a helical membrane-spanning segment. Residues 835–869 (PETQGKTLEDIERKMMGRVRRMSSVANMKPLAFNM) lie on the Cytoplasmic side of the membrane. 2 positions are modified to phosphoserine: serine 857 and serine 858.

The protein belongs to the major facilitator superfamily. Sugar transporter (TC 2.A.1.1) family. Trehalose transporter subfamily.

The protein resides in the cell membrane. In terms of biological role, low-capacity facilitative transporter for trehalose. Does not transport maltose, sucrose or lactose. Mediates the bidirectional transfer of trehalose. Responsible for the transport of trehalose synthesized in the fat body and the incorporation of trehalose into other tissues that require a carbon source, thereby regulating trehalose levels in the hemolymph. The sequence is that of Facilitated trehalose transporter Tret1 from Drosophila persimilis (Fruit fly).